The primary structure comprises 589 residues: ATP-dependent lipid A-core flippase (589 aa).

6 consecutive transmembrane segments (helical) span residues Ala37 to Leu57, Leu72 to Leu92, Ile151 to Leu171, Trp173 to Leu193, Ser260 to Leu280, and Thr286 to Val306. The ABC transmembrane type-1 domain occupies Ala37–Arg318. The 235-residue stretch at Ile350–Leu584 folds into the ABC transporter domain. Gly384–Thr391 serves as a coordination point for ATP.

This sequence belongs to the ABC transporter superfamily. Lipid exporter (TC 3.A.1.106) family. Homodimer.

It is found in the cell inner membrane. It catalyses the reaction ATP + H2O + lipid A-core oligosaccharideSide 1 = ADP + phosphate + lipid A-core oligosaccharideSide 2.. Involved in lipopolysaccharide (LPS) biosynthesis. Translocates lipid A-core from the inner to the outer leaflet of the inner membrane. Transmembrane domains (TMD) form a pore in the inner membrane and the ATP-binding domain (NBD) is responsible for energy generation. The chain is ATP-dependent lipid A-core flippase from Polaromonas sp. (strain JS666 / ATCC BAA-500).